The following is a 272-amino-acid chain: uncharacterized protein (272 aa).

Positions 20-133 constitute an AB hydrolase-1 domain; the sequence is PVLIFIPGAN…PPINTFLPDS (114 aa).

Belongs to the AB hydrolase superfamily.

This is an uncharacterized protein from Staphylococcus aureus (strain MSSA476).